We begin with the raw amino-acid sequence, 745 residues long: uncharacterized protein (745 aa).

In terms of domain architecture, HTH araC/xylS-type spans 158-256; it reads NQVCDYIELH…HQTPKQYRGD (99 aa). DNA-binding regions (H-T-H motif) lie at residues 175–196 and 223–246; these read SELS…TESL and ITDI…KHFT.

This is an uncharacterized protein from Staphylococcus aureus (strain MW2).